Reading from the N-terminus, the 98-residue chain is U1-theraphotoxin-Ap1a (98 aa).

An N-terminal signal peptide occupies residues 1–23 (MRSLTLAAVLACSLLLVFHTSAA). A propeptide spanning residues 24–50 (EELEVQDGHLMNPGDGDTALATVDDER) is cleaved from the precursor. 3 disulfide bridges follow: cysteine 54/cysteine 84, cysteine 58/cysteine 90, and cysteine 72/cysteine 95. The segment at 63–84 (DGKSKEGKPCKPKGDKNKDKKC) is disordered.

Belongs to the neurotoxin 12 (Hwtx-2) family. 01 (Ap1a) subfamily. In terms of tissue distribution, expressed by the venom gland.

The protein resides in the secreted. Is toxic to both insects and mammals. Induces reversible paralysis when injected into S.frugiperda larvae. Reduces both the amplitude and frequency of responses from muscle (GF-TTM and GF-DLM) pathways in the D.melanogaster giant fiber circuit, suggesting an action at the neuromuscular junction, which is mediated by glutamatergic receptors. In mice, intracranial injection of 30 ug causes increased urination, myoclonus, hypermotility with circular movements followed by respiratory and generalized seizures resulting in death within 25-35 minutes of injection. This is U1-theraphotoxin-Ap1a from Acanthoscurria paulensis (Brazilian giant black tarantula spider).